Reading from the N-terminus, the 764-residue chain is Polyadenylate-binding protein, cytoplasmic and nuclear (764 aa).

The disordered stretch occupies residues 36–56; that stretch reads VPEAQAEGAEAAPTPTAAPHP. RRM domains follow at residues 60–138, 148–225, 241–318, and 344–462; these read ASLY…WSQR, GNIF…HHIP, TNVY…RAQK, and VNLY…LAQR. Disordered stretches follow at residues 375-420 and 587-634; these read VMRD…GDRK and GRGG…PRGN. Basic and acidic residues-rich tracts occupy residues 387–399 and 408–420; these read KDEKDKENKKEGE and GSEKKTEKKGDRK. The segment covering 587-596 has biased composition (gly residues); it reads GRGGPAGRGP. Positions 597–613 are enriched in low complexity; sequence QGIPAGIPQGLQGGPAV. The PABC domain maps to 657 to 734; it reads GSFLQAQLAT…ALAVYDEYLK (78 aa). Residues 735-745 show a composition bias toward polar residues; that stretch reads TQGQQPTQQPA. The tract at residues 735 to 764 is disordered; it reads TQGQQPTQQPAEANGEQPKAEEQKPEEQKA. Residues 752–764 show a composition bias toward basic and acidic residues; the sequence is PKAEEQKPEEQKA.

Belongs to the polyadenylate-binding protein type-1 family.

The protein resides in the cytoplasm. It localises to the nucleus. Functionally, binds the poly(A) tail of mRNA. Appears to be an important mediator of the multiple roles of the poly(A) tail in mRNA biogenesis, stability and translation. In the nucleus, involved in both mRNA cleavage and polyadenylation. Is also required for efficient mRNA export to the cytoplasm. Acts in concert with a poly(A)-specific nuclease (PAN) to affect poly(A) tail shortening, which may occur concomitantly with either nucleocytoplasmic mRNA transport or translational initiation. In the cytoplasm, stimulates translation initiation and regulates mRNA decay through translation termination-coupled poly(A) shortening, probably mediated by PAN. The chain is Polyadenylate-binding protein, cytoplasmic and nuclear (pabp-1) from Neurospora crassa (strain ATCC 24698 / 74-OR23-1A / CBS 708.71 / DSM 1257 / FGSC 987).